Here is an 858-residue protein sequence, read N- to C-terminus: Elongation factor 2 (858 aa).

The tr-type G domain maps to 17 to 362; sequence ANIRNMSVIA…MITIHLPSPV (346 aa). 26–33 provides a ligand contact to GTP; the sequence is AHVDHGKS. T54 carries the post-translational modification Phosphothreonine. T57 carries the phosphothreonine; by EEF2K modification. Phosphothreonine is present on T59. K152 carries the N6-succinyllysine modification. GTP is bound by residues 158 to 161 and 216 to 218; these read NKMD and SGL. An N6-acetyllysine modification is found at K235. K239 is modified (N6-acetyllysine; alternate). K239 is covalently cross-linked (Glycyl lysine isopeptide (Lys-Gly) (interchain with G-Cter in SUMO1); alternate). Position 265 is a phosphotyrosine; by CSK (Y265). K272 carries the post-translational modification N6-acetyllysine; alternate. K272 bears the N6-succinyllysine; alternate mark. K275 carries the post-translational modification N6-acetyllysine. K322 is covalently cross-linked (Glycyl lysine isopeptide (Lys-Gly) (interchain with G-Cter in SUMO)). S325 is subject to Phosphoserine. Y373 carries the phosphotyrosine; by CSK modification. T435 is modified (phosphothreonine). N6-acetyllysine occurs at positions 439 and 445. Position 502 is a phosphoserine (S502). Position 525 is an N6,N6,N6-trimethyllysine; by EEF2KMT (K525). A Glycyl lysine isopeptide (Lys-Gly) (interchain with G-Cter in SUMO) cross-link involves residue K529. K572 is modified (N6-succinyllysine). S595 carries the phosphoserine; by CDK2 modification. Residue K619 is modified to N6-acetyllysine. H715 carries the post-translational modification (Microbial infection) ADP-ribosyldiphthamide. A Diphthamide modification is found at H715.

This sequence belongs to the TRAFAC class translation factor GTPase superfamily. Classic translation factor GTPase family. EF-G/EF-2 subfamily. In terms of assembly, binds to 80S ribosomes. Actively translating ribosomes show mutually exclusive binding of eIF5a (EIF5A or EIF5A2) and EEF2/eEF2. Interacts with SERBP1; interaction sequesters EEF2/eEF2 at the A-site of the ribosome, thereby blocking the interaction sites of the mRNA-tRNA complex, promoting ribosome stabilization and hibernation. Interacts with HABP4; interaction takes place at the A-site of hibernating ribosomes and promotes ribosome stabilization. Component of the mRNA surveillance SURF complex, at least composed of ERF1, ERF3 (ERF3A or ERF3B), EEF2, UPF1/RENT1, SMG1, SMG8 and SMG9. Interacts with RBPMS2. Post-translationally, phosphorylation by EF-2 kinase completely inactivates EF-2; it requires prior phosphorylation by CDK2 at Ser-595 during mitotic prometaphase. Phosphorylation by CSK promotes SUMOylation, proteolytic cleavage, and nuclear translocation if the C-terminal fragment. Diphthamide is 2-[3-carboxyamido-3-(trimethyl-ammonio)propyl]histidine. In terms of processing, (Microbial infection) Diphthamide can be ADP-ribosylated by diphtheria toxin and by Pseudomonas exotoxin A, thus arresting protein synthesis. Post-translationally, ISGylated. Proteolytically processed at two sites following phosphorylation by CSK. In terms of processing, SUMOylated following phosphorylation by CSK, promotes proteolytic cleavage.

It localises to the cytoplasm. It is found in the nucleus. It carries out the reaction GTP + H2O = GDP + phosphate + H(+). Its function is as follows. Catalyzes the GTP-dependent ribosomal translocation step during translation elongation. During this step, the ribosome changes from the pre-translocational (PRE) to the post-translocational (POST) state as the newly formed A-site-bound peptidyl-tRNA and P-site-bound deacylated tRNA move to the P and E sites, respectively. Catalyzes the coordinated movement of the two tRNA molecules, the mRNA and conformational changes in the ribosome. This is Elongation factor 2 (EEF2) from Cricetulus griseus (Chinese hamster).